A 418-amino-acid chain; its full sequence is MRPQATLTVLPVERPLVGRVSPPGSKSITNRALLLAGLAKGTSRLTGALKSDDTRVMSEALRLMGVQVDEPDDSTFVVTSSGHWQAPQQALFLGNAGTATRFLTAALANFEGDFVVDGDEYMRKRPIGPLVDALQRMGVEVSAPSGCPPVAIKGKGGLEAGRIEIDGNLSSQYVSALLMAGACGKGPVEVALTGSEIGARGYLDLTLAAMRAFGAEVQAIGDAAWKVSATGYRATDFHIEPDASAATYLWAAQALTEGAIDLGVASNAFTQPDALASQIIASFPNMPAVIDGSQMQDAIPTLAVLAAFNRQPVRFVGIANLRVKECDRISALSNGLCAIAPGLAVEEGDDLIVTANPTLAGTTVDALIDTHSDHRIAMCFALAGLKIAGIRILDPDCVAKTYPGYWDALASLGVSVQR.

Lysine 26, serine 27, and arginine 31 together coordinate 3-phosphoshikimate. A phosphoenolpyruvate-binding site is contributed by lysine 26. Phosphoenolpyruvate contacts are provided by glycine 97 and arginine 125. 3-phosphoshikimate is bound by residues serine 170, serine 171, glutamine 172, aspartate 297, asparagine 320, and lysine 324. A phosphoenolpyruvate-binding site is contributed by glutamine 172. Aspartate 297 acts as the Proton acceptor in catalysis. Phosphoenolpyruvate is bound by residues arginine 328, arginine 375, and lysine 400.

It belongs to the EPSP synthase family. Monomer.

Its subcellular location is the cytoplasm. The catalysed reaction is 3-phosphoshikimate + phosphoenolpyruvate = 5-O-(1-carboxyvinyl)-3-phosphoshikimate + phosphate. Its pathway is metabolic intermediate biosynthesis; chorismate biosynthesis; chorismate from D-erythrose 4-phosphate and phosphoenolpyruvate: step 6/7. Its function is as follows. Catalyzes the transfer of the enolpyruvyl moiety of phosphoenolpyruvate (PEP) to the 5-hydroxyl of shikimate-3-phosphate (S3P) to produce enolpyruvyl shikimate-3-phosphate and inorganic phosphate. In Pseudomonas syringae pv. syringae (strain B728a), this protein is 3-phosphoshikimate 1-carboxyvinyltransferase.